The chain runs to 148 residues: Putative pre-16S rRNA nuclease (148 aa).

This sequence belongs to the YqgF nuclease family.

It is found in the cytoplasm. Functionally, could be a nuclease involved in processing of the 5'-end of pre-16S rRNA. This chain is Putative pre-16S rRNA nuclease, found in Chlamydia trachomatis serovar L2 (strain ATCC VR-902B / DSM 19102 / 434/Bu).